The chain runs to 565 residues: UV-stimulated scaffold protein A homolog (565 aa).

A VHS-like region spans residues 11–156 (RKNLNRILQE…VTLRKTKFVD (146 aa)). A coiled-coil region spans residues 155-215 (VDYENGEKKI…ELETTMEMLV (61 aa)). The UVSSA-type zinc-finger motif lies at 441-468 (DRECLAKLPSGALCKRKDMFKCPLHGPL). Positions 444, 454, 462, and 465 each coordinate Zn(2+). The stretch at 480 to 510 (DEDRLKEIDRKERKRLKEAEEFSRKIVKEYE) forms a coiled coil. Disordered regions lie at residues 510–530 (ESKT…SRLQ) and 542–565 (VSAD…FSHL).

The protein belongs to the UVSSA family.

Its subcellular location is the chromosome. Functionally, factor involved in transcription-coupled nucleotide excision repair (TC-NER) in response to UV damage. TC-NER allows RNA polymerase II-blocking lesions to be rapidly removed from the transcribed strand of active genes. The polypeptide is UV-stimulated scaffold protein A homolog (Caenorhabditis briggsae).